Here is a 229-residue protein sequence, read N- to C-terminus: Protein OPG034 (229 aa).

The protein belongs to the orthopoxvirus OPG034 family.

The sequence is that of Protein OPG034 (OPG034) from Vaccinia virus (strain Western Reserve) (VACV).